A 130-amino-acid chain; its full sequence is Small ribosomal subunit protein uS9 (130 aa).

Belongs to the universal ribosomal protein uS9 family.

The chain is Small ribosomal subunit protein uS9 from Agathobacter rectalis (strain ATCC 33656 / DSM 3377 / JCM 17463 / KCTC 5835 / VPI 0990) (Eubacterium rectale).